Reading from the N-terminus, the 361-residue chain is Peptide chain release factor 1 (361 aa).

At Gln235 the chain carries N5-methylglutamine. The tract at residues 284-306 is disordered; the sequence is SQQATAEAMTRKLQVGSGDRSQR.

The protein belongs to the prokaryotic/mitochondrial release factor family. Methylated by PrmC. Methylation increases the termination efficiency of RF1.

It localises to the cytoplasm. Peptide chain release factor 1 directs the termination of translation in response to the peptide chain termination codons UAG and UAA. In Xylella fastidiosa (strain 9a5c), this protein is Peptide chain release factor 1.